Consider the following 1023-residue polypeptide: 2-oxoglutarate dehydrogenase complex component E1 (1023 aa).

The transit peptide at Met1 to Tyr40 directs the protein to the mitochondrion. Lys74 is subject to N6-succinyllysine. Ser100 bears the Phosphoserine mark. Ca(2+) contacts are provided by His143, Asp156, and Asp158. Arg312 is a binding site for thiamine diphosphate. Lys401 is modified (N6-acetyllysine). The thiamine diphosphate site is built by Asp411, Asn444, and Ile446. 3 residues coordinate Mg(2+): Asp411, Asn444, and Ile446. Residue Lys534 forms a Glycyl lysine isopeptide (Lys-Gly) (interchain with G-Cter in ubiquitin) linkage. Lys564 is subject to N6-succinyllysine. Residue Gln676 coordinates thiamine diphosphate. The recognized by alloreactive CD8 cytotoxic T-lymphocytes in association with a class I MHC protein stretch occupies residues Leu933–Asp939. Position 970 is an N6-acetyllysine (Lys970).

The protein belongs to the alpha-ketoglutarate dehydrogenase family. In terms of assembly, homodimer. The 2-oxoglutarate dehydrogenase complex is composed of OGDH (2-oxoglutarate dehydrogenase; E1), DLST (dihydrolipoamide succinyltransferase; E2), DLD (dihydrolipoamide dehydrogenase; E3) and the assembly factor KGD4. It contains multiple copies of the three enzymatic components (E1, E2 and E3). In the nucleus, the 2-oxoglutarate dehydrogenase complex associates with KAT2A. Interacts with ABHD11; this interaction maintains the functional lipoylation of the 2-oxoglutarate dehydrogenase complex. Thiamine diphosphate is required as a cofactor. The cofactor is Mg(2+).

The protein localises to the mitochondrion. It localises to the nucleus. The enzyme catalyses N(6)-[(R)-lipoyl]-L-lysyl-[protein] + 2-oxoglutarate + H(+) = N(6)-[(R)-S(8)-succinyldihydrolipoyl]-L-lysyl-[protein] + CO2. Calcium ions and ADP stimulate, whereas ATP and NADH reduce catalytic activity. Its function is as follows. 2-oxoglutarate dehydrogenase (E1o) component of the 2-oxoglutarate dehydrogenase complex (OGDHC). Participates in the first step, rate limiting for the overall conversion of 2-oxoglutarate to succinyl-CoA and CO(2) catalyzed by the whole OGDHC. Catalyzes the irreversible decarboxylation of 2-oxoglutarate (alpha-ketoglutarate) via the thiamine diphosphate (ThDP) cofactor and subsequent transfer of the decarboxylated acyl intermediate on an oxidized dihydrolipoyl group that is covalently amidated to the E2 enzyme (dihydrolipoyllysine-residue succinyltransferase or DLST). Plays a key role in the Krebs (citric acid) cycle, which is a common pathway for oxidation of fuel molecules, including carbohydrates, fatty acids, and amino acids. Can catalyze the decarboxylation of 2-oxoadipate in vitro, but at a much lower rate than 2-oxoglutarate. Mainly active in the mitochondrion. A fraction of the 2-oxoglutarate dehydrogenase complex also localizes in the nucleus and is required for lysine succinylation of histones: associates with KAT2A on chromatin and provides succinyl-CoA to histone succinyltransferase KAT2A. In Mus musculus (Mouse), this protein is 2-oxoglutarate dehydrogenase complex component E1.